The sequence spans 178 residues: Cytochrome b6-f complex iron-sulfur subunit (178 aa).

Residues 20–42 (LLTFGTATGVALGALYPVANYFM) traverse the membrane as a helical segment. In terms of domain architecture, Rieske spans 65-161 (KTGWLANHQA…VDVDDDAVLV (97 aa)). Residues Cys107, His109, Cys125, and His128 each coordinate [2Fe-2S] cluster. Cys112 and Cys127 are disulfide-bonded.

The protein belongs to the Rieske iron-sulfur protein family. The 4 large subunits of the cytochrome b6-f complex are cytochrome b6, subunit IV (17 kDa polypeptide, PetD), cytochrome f and the Rieske protein, while the 4 small subunits are PetG, PetL, PetM and PetN. The complex functions as a dimer. It depends on [2Fe-2S] cluster as a cofactor.

It is found in the cellular thylakoid membrane. It catalyses the reaction 2 oxidized [plastocyanin] + a plastoquinol + 2 H(+)(in) = 2 reduced [plastocyanin] + a plastoquinone + 4 H(+)(out). Its function is as follows. Component of the cytochrome b6-f complex, which mediates electron transfer between photosystem II (PSII) and photosystem I (PSI), cyclic electron flow around PSI, and state transitions. The chain is Cytochrome b6-f complex iron-sulfur subunit from Prochlorococcus marinus (strain MIT 9515).